The sequence spans 373 residues: GDP-mannose 4,6 dehydratase 2 (373 aa).

Residues 1–15 (MASENNGSRSDSESI) show a composition bias toward polar residues. A disordered region spans residues 1-21 (MASENNGSRSDSESITAPKAD). NADP(+) contacts are provided by residues 35–40 (GITGQD), R60, 91–92 (DL), 113–117 (LAAQS), and Y128. S117 provides a ligand contact to substrate. Residue S162 participates in substrate binding. S162 is an active-site residue. Catalysis depends on nucleophile residues E164 and Y185. Y185 is a binding site for substrate. K189 contributes to the NADP(+) binding site. N214 serves as a coordination point for substrate. H215 and R220 together coordinate NADP(+). Substrate contacts are provided by residues 220–228 (RGENFVTRK), G247, R253, and 314–317 (RPAE).

This sequence belongs to the NAD(P)-dependent epimerase/dehydratase family. GDP-mannose 4,6-dehydratase subfamily. In terms of assembly, homotetramer. Binds to GER1. It depends on NADP(+) as a cofactor. In terms of tissue distribution, expressed in roots, flowers, siliques, leaves and stems. Not expressed in the root meristem and the proximal part of the elongation zone, or in emerging lateral roots. Expressed in trichomes and guard cells, and in pollen just before anthesis.

It carries out the reaction GDP-alpha-D-mannose = GDP-4-dehydro-alpha-D-rhamnose + H2O. Its pathway is nucleotide-sugar biosynthesis; GDP-L-fucose biosynthesis via de novo pathway; GDP-L-fucose from GDP-alpha-D-mannose: step 1/2. Functionally, catalyzes the conversion of GDP-D-mannose to GDP-4-dehydro-6-deoxy-D-mannose. This is GDP-mannose 4,6 dehydratase 2 (MUR1) from Arabidopsis thaliana (Mouse-ear cress).